The sequence spans 417 residues: UDP-N-acetylglucosamine 1-carboxyvinyltransferase (417 aa).

Residue 22-23 participates in phosphoenolpyruvate binding; that stretch reads KN. Residue Arg-92 coordinates UDP-N-acetyl-alpha-D-glucosamine. Cys-116 acts as the Proton donor in catalysis. Cys-116 carries the post-translational modification 2-(S-cysteinyl)pyruvic acid O-phosphothioketal. The UDP-N-acetyl-alpha-D-glucosamine site is built by Asp-304 and Ile-326.

It belongs to the EPSP synthase family. MurA subfamily.

The protein resides in the cytoplasm. It catalyses the reaction phosphoenolpyruvate + UDP-N-acetyl-alpha-D-glucosamine = UDP-N-acetyl-3-O-(1-carboxyvinyl)-alpha-D-glucosamine + phosphate. It participates in cell wall biogenesis; peptidoglycan biosynthesis. In terms of biological role, cell wall formation. Adds enolpyruvyl to UDP-N-acetylglucosamine. The chain is UDP-N-acetylglucosamine 1-carboxyvinyltransferase from Desulforapulum autotrophicum (strain ATCC 43914 / DSM 3382 / VKM B-1955 / HRM2) (Desulfobacterium autotrophicum).